Consider the following 354-residue polypeptide: UPF0421 protein BH2644 (354 aa).

Transmembrane regions (helical) follow at residues 22-42 (AVCLTTAICMAFNLSPTFAVI), 60-80 (LIRLPAAALGAFFAVLSAYFF), 107-127 (TLVATLTAVAMIPSTTDHLFA), and 133-153 (VAGTSLGIMISTFVNFMILPP).

Belongs to the UPF0421 family.

It localises to the cell membrane. In Halalkalibacterium halodurans (strain ATCC BAA-125 / DSM 18197 / FERM 7344 / JCM 9153 / C-125) (Bacillus halodurans), this protein is UPF0421 protein BH2644.